The chain runs to 378 residues: Probable endopolygalacturonase AFUB_016610 (378 aa).

The signal sequence occupies residues 1–19 (MLKLMGSLVLLASAAEVIA). Positions 20–35 (SPAAEPVAPSTTLEKR) are excised as a propeptide. A disulfide bridge connects residues Cys-38 and Cys-56. PbH1 repeat units lie at residues 147 to 169 (TSSS…SING), 170 to 200 (CDGL…DIGS), and 201 to 222 (SSNI…AVNS). Asp-215 (proton donor) is an active-site residue. A disulfide bond links Cys-217 and Cys-233. His-237 is an active-site residue. PbH1 repeat units follow at residues 252 to 273 (VENV…RIKA) and 281 to 303 (IKGV…LIEQ). An N-linked (GlcNAc...) asparagine glycan is attached at Asn-254. Asn-327 is a glycosylation site (N-linked (GlcNAc...) asparagine). Cys-345 and Cys-350 are oxidised to a cystine. N-linked (GlcNAc...) asparagine glycosylation is present at Asn-352. A disulfide bridge connects residues Cys-369 and Cys-378.

This sequence belongs to the glycosyl hydrolase 28 family.

It localises to the secreted. The enzyme catalyses (1,4-alpha-D-galacturonosyl)n+m + H2O = (1,4-alpha-D-galacturonosyl)n + (1,4-alpha-D-galacturonosyl)m.. Its function is as follows. Involved in maceration and soft-rotting of plant tissue. Hydrolyzes the 1,4-alpha glycosidic bonds of de-esterified pectate in the smooth region of the plant cell wall. The protein is Probable endopolygalacturonase AFUB_016610 of Aspergillus fumigatus (strain CBS 144.89 / FGSC A1163 / CEA10) (Neosartorya fumigata).